The chain runs to 142 residues: Coactosin-like protein (142 aa).

Alanine 2 bears the N-acetylalanine mark. An ADF-H domain is found at alanine 2–lysine 130. Residues threonine 66–lysine 75 form a flexible and important for F-actin binding region. N6-acetyllysine occurs at positions 102 and 126.

Belongs to the actin-binding proteins ADF family. Coactosin subfamily. Interacts with 5-lipoxygenase (ALOX5/5LO) in a calcium-independent manner. Binds to F-actin with a stoichiometry of 1:2. Widely expressed with highest levels in placenta, lung, kidney and peripheral blood leukocytes and lower levels in brain, liver and pancreas.

The protein resides in the cytoplasm. It localises to the cytoskeleton. Its subcellular location is the nucleus. Its function is as follows. Binds to F-actin in a calcium-independent manner. Has no direct effect on actin depolymerization. Acts as a chaperone for ALOX5 (5LO), influencing both its stability and activity in leukotrienes synthesis. The polypeptide is Coactosin-like protein (COTL1) (Homo sapiens (Human)).